Here is a 480-residue protein sequence, read N- to C-terminus: ESX-1 secretion system ATPase EccB1 (480 aa).

A helical membrane pass occupies residues 44 to 64 (IALGIVVAVLILAGAALLAYF). Residues 461 to 480 (DTLPADPSPRKVPAGASGAP) form a disordered region.

Belongs to the EccB family. Part of the ESX-1 / type VII secretion system (T7SS), which is composed of cytosolic and membrane components. The ESX-1 membrane complex is composed of EccB1, EccCa1, EccCb1, EccD1 and EccE1.

The protein resides in the cell inner membrane. In terms of biological role, an ATPase. Part of the ESX-1 specialized secretion system, which delivers several virulence factors to host cells during infection, including the key virulence factors EsxA (ESAT-6) and EsxB (CFP-10). This is ESX-1 secretion system ATPase EccB1 from Mycobacterium tuberculosis (strain CDC 1551 / Oshkosh).